The following is a 785-amino-acid chain: Phenylalanine--tRNA ligase beta subunit (785 aa).

One can recognise a tRNA-binding domain in the interval 39 to 150; that stretch reads RTWAAGVVVG…ASLPLGLDVG (112 aa). Residues 400–476 enclose the B5 domain; that stretch reads RENRVVSLRP…RVVGYDRFAP (77 aa). Mg(2+) contacts are provided by aspartate 454, aspartate 460, glutamate 463, and glutamate 464. One can recognise an FDX-ACB domain in the interval 692–784; the sequence is SPFPPAARDL…LAERYSVDLR (93 aa).

This sequence belongs to the phenylalanyl-tRNA synthetase beta subunit family. Type 1 subfamily. In terms of assembly, tetramer of two alpha and two beta subunits. Requires Mg(2+) as cofactor.

It is found in the cytoplasm. The catalysed reaction is tRNA(Phe) + L-phenylalanine + ATP = L-phenylalanyl-tRNA(Phe) + AMP + diphosphate + H(+). This Gloeobacter violaceus (strain ATCC 29082 / PCC 7421) protein is Phenylalanine--tRNA ligase beta subunit.